The primary structure comprises 215 residues: Protein C' (215 aa).

A disordered region spans residues 12–34 (MPSFLKKILKLRGRRQEDESRSR). The segment at 15-22 (FLKKILKL) is involved in self-degradation and in host STAT1 degradation.

This sequence belongs to the respirovirus protein C family. In terms of assembly, the different isoforms interact (via C-terminus) with unphosphorylated and phosphorylated human STAT1 (via N-terminus), favoring the formation of parallel STAT1 homodimers. The different isoforms do not interact with host STAT2. C protein interacts with L protein; this interaction has an inhibitory effect on viral transcription and replication. Protein Y2 is produced not only by alternative initiation, but also by proteolytic cleavage of C'. Only alternative initiation is detected in vitro, whereas in vivo cleavage seems to be predominant.

It localises to the host cytoplasm. Functionally, the different products prevent the establishment of cellular antiviral state by blocking the interferon-alpha/beta (IFN-alpha/beta) and IFN-gamma signaling pathways. They inhibit IFN-alpha/beta induced tyrosine phosphorylation of STAT1 and STAT2. Blocking the IFN-alpha/beta pathway requires binding to STAT1 in the cytoplasm. They inhibit IFN-gamma induced serine phosphorylation of STAT1. Block the IFN-gamma pathway by binding to and stabilizing the parallel form of the STAT1 dimer, further inducing high-molecular-weight complex formation and inhibition of transcription by IFN-gamma. May also have a role in preventing the cell to enter apoptosis. Modulate regulation of viral transcription and replication. Overexpression inhibits the viral RNA polymerase. The absence of all C', C and Y2 proteins leads to viral delayed growth. Plays an important role in virion particles release. Modulates virion shape. This chain is Protein C' (P/V/C), found in Cavia cutleri (Guinea pig).